An 869-amino-acid chain; its full sequence is Probable beta-glucosidase F (869 aa).

Positions 1–19 are cleaved as a signal peptide; the sequence is MRVLSAIALVASLASSALS. N-linked (GlcNAc...) asparagine glycosylation is found at N77 and N261. The active site involves D289. 4 N-linked (GlcNAc...) asparagine glycosylation sites follow: N332, N364, N399, and N478. Residues 677 to 697 form a disordered region; it reads STYPPTRPPKGPTPTYPTAIP. Residues 681–691 show a composition bias toward pro residues; it reads PTRPPKGPTPT. The N-linked (GlcNAc...) asparagine glycan is linked to N728.

Belongs to the glycosyl hydrolase 3 family.

Its subcellular location is the secreted. It catalyses the reaction Hydrolysis of terminal, non-reducing beta-D-glucosyl residues with release of beta-D-glucose.. The protein operates within glycan metabolism; cellulose degradation. Functionally, beta-glucosidases are one of a number of cellulolytic enzymes involved in the degradation of cellulosic biomass. Catalyzes the last step releasing glucose from the inhibitory cellobiose. The chain is Probable beta-glucosidase F (bglF) from Aspergillus fumigatus (strain ATCC MYA-4609 / CBS 101355 / FGSC A1100 / Af293) (Neosartorya fumigata).